The primary structure comprises 625 residues: Endoglucanase D (625 aa).

Residues 1-17 (SLTGVFPSGLIETKVSA) form the signal peptide. The active-site Nucleophile is the D177. Residues H492 and D522 contribute to the active site. E531 functions as the Proton donor in the catalytic mechanism. The Dockerin domain occupies 555–625 (NEVLYGDVND…LIRVIEKLPI (71 aa)).

It belongs to the glycosyl hydrolase 9 (cellulase E) family. Requires Ca(2+) as cofactor.

It catalyses the reaction Endohydrolysis of (1-&gt;4)-beta-D-glucosidic linkages in cellulose, lichenin and cereal beta-D-glucans.. In terms of biological role, this enzyme catalyzes the endohydrolysis of 1,4-beta-glucosidic linkages in cellulose, lichenin and cereal beta-D-glucans. The sequence is that of Endoglucanase D (celD) from Acetivibrio thermocellus (Hungateiclostridium thermocellum).